The chain runs to 233 residues: Octanoyltransferase (233 aa).

Residues 34–214 form the BPL/LPL catalytic domain; that stretch reads GQAPSTVLLL…EFSAREATLI (181 aa). Residues 72-79, 144-146, and 157-159 contribute to the substrate site; these read RGGKLTWH, AIG, and GFS. The Acyl-thioester intermediate role is filled by cysteine 175.

It belongs to the LipB family.

It is found in the cytoplasm. It catalyses the reaction octanoyl-[ACP] + L-lysyl-[protein] = N(6)-octanoyl-L-lysyl-[protein] + holo-[ACP] + H(+). It functions in the pathway protein modification; protein lipoylation via endogenous pathway; protein N(6)-(lipoyl)lysine from octanoyl-[acyl-carrier-protein]: step 1/2. In terms of biological role, catalyzes the transfer of endogenously produced octanoic acid from octanoyl-acyl-carrier-protein onto the lipoyl domains of lipoate-dependent enzymes. Lipoyl-ACP can also act as a substrate although octanoyl-ACP is likely to be the physiological substrate. This is Octanoyltransferase from Renibacterium salmoninarum (strain ATCC 33209 / DSM 20767 / JCM 11484 / NBRC 15589 / NCIMB 2235).